A 452-amino-acid chain; its full sequence is Probable E3 ubiquitin-protein ligase ARI15 (452 aa).

Positions 22 to 256 (SRVYCGICSN…GTSGSCLAPA (235 aa)) are TRIAD supradomain. Cys26, Cys29, Cys54, His56, Cys59, Cys62, Cys83, Cys88, Cys128, Cys133, Cys154, Cys156, Cys161, Cys164, His169, Cys174, Cys208, Cys211, Cys229, Cys231, Cys236, Cys239, His246, and Cys252 together coordinate Zn(2+). An RING-type 1 zinc finger spans residues 26–88 (CGICSNIGDD…TAISCPDRDC (63 aa)). The IBR-type zinc finger occupies 106–174 (AMYELYILKS…MLESHRPVTC (69 aa)). The segment at 208 to 239 (CPHCFIPVEIDGERPWAQFLTCVCSGRFCWKC) adopts an RING-type 2; atypical zinc-finger fold. A RanBP2-type zinc finger spans residues 414–445 (NYGGPYWLCDRCTYGNSWFQRACKMCCDPTAS).

Belongs to the RBR family. Ariadne subfamily. Requires Zn(2+) as cofactor. Ubiquitous.

It carries out the reaction [E2 ubiquitin-conjugating enzyme]-S-ubiquitinyl-L-cysteine + [acceptor protein]-L-lysine = [E2 ubiquitin-conjugating enzyme]-L-cysteine + [acceptor protein]-N(6)-ubiquitinyl-L-lysine.. It participates in protein modification; protein ubiquitination. In terms of biological role, might act as an E3 ubiquitin-protein ligase, or as part of E3 complex, which accepts ubiquitin from specific E2 ubiquitin-conjugating enzymes and then transfers it to substrates. The polypeptide is Probable E3 ubiquitin-protein ligase ARI15 (ARI15) (Arabidopsis thaliana (Mouse-ear cress)).